Consider the following 206-residue polypeptide: Protein-methionine-sulfoxide reductase heme-binding subunit MsrQ (206 aa).

A run of 6 helical transmembrane segments spans residues 7 to 27 (IIIHVCCLGPVAWLAWVLLSG), 43 to 63 (FLGFSALTILLIMFILGKVFY), 77 to 97 (LGLWAWFYVVLHVYAYLALEL), 112 to 132 (GYLIIGAIAFLILTLMALSSW), 142 to 162 (WWFYLHQLGYYALLLGAIHYV), and 172 to 192 (SMLYLILSIMILCDALYGLFI).

Belongs to the MsrQ family. In terms of assembly, heterodimer of a catalytic subunit (MsrP) and a heme-binding subunit (MsrQ). The cofactor is FMN. Heme b serves as cofactor.

It is found in the cell inner membrane. In terms of biological role, part of the MsrPQ system that repairs oxidized periplasmic proteins containing methionine sulfoxide residues (Met-O), using respiratory chain electrons. Thus protects these proteins from oxidative-stress damage caused by reactive species of oxygen and chlorine generated by the host defense mechanisms. MsrPQ is essential for the maintenance of envelope integrity under bleach stress, rescuing a wide series of structurally unrelated periplasmic proteins from methionine oxidation. MsrQ provides electrons for reduction to the reductase catalytic subunit MsrP, using the quinone pool of the respiratory chain. The sequence is that of Protein-methionine-sulfoxide reductase heme-binding subunit MsrQ from Pasteurella multocida (strain Pm70).